Reading from the N-terminus, the 284-residue chain is Putative xyloglucan endotransglucosylase/hydrolase protein 13 (284 aa).

The signal sequence occupies residues 1–24 (MAAFTTKQSLLLLSLLLLISLSAG). One can recognise a GH16 domain in the interval 25–214 (SFYDNFDITW…WTNAPFSASY (190 aa)). Residue Glu100 is the Nucleophile of the active site. Glu104 acts as the Proton donor in catalysis. Glu104 serves as a coordination point for xyloglucan. N-linked (GlcNAc...) asparagine glycosylation is present at Asn108. Xyloglucan-binding positions include 117-119 (HTN), 127-129 (NRE), 193-194 (DW), and Gly198. Cystine bridges form between Cys223–Cys234 and Cys267–Cys281. A xyloglucan-binding site is contributed by Arg272.

It belongs to the glycosyl hydrolase 16 family. XTH group 2 subfamily. Contains at least one intrachain disulfide bond essential for its enzymatic activity.

The protein localises to the secreted. It localises to the cell wall. The protein resides in the extracellular space. It is found in the apoplast. It carries out the reaction breaks a beta-(1-&gt;4) bond in the backbone of a xyloglucan and transfers the xyloglucanyl segment on to O-4 of the non-reducing terminal glucose residue of an acceptor, which can be a xyloglucan or an oligosaccharide of xyloglucan.. In terms of biological role, may catalyze xyloglucan endohydrolysis (XEH) and/or endotransglycosylation (XET). Cleaves and religates xyloglucan polymers, an essential constituent of the primary cell wall, and thereby participates in cell wall construction of growing tissues. The polypeptide is Putative xyloglucan endotransglucosylase/hydrolase protein 13 (XTH13) (Arabidopsis thaliana (Mouse-ear cress)).